The following is a 430-amino-acid chain: UPF0597 protein BDI_1130 (430 aa).

The protein belongs to the UPF0597 family.

This chain is UPF0597 protein BDI_1130, found in Parabacteroides distasonis (strain ATCC 8503 / DSM 20701 / CIP 104284 / JCM 5825 / NCTC 11152).